A 30-amino-acid chain; its full sequence is Cyclotide hyen-C (30 aa).

A cross-link (cyclopeptide (Gly-Asn)) is located at residues 1-30 (GTHPCQETCVTSTRCSTQGCHCNWPICFKN). 3 disulfides stabilise this stretch: C5/C20, C9/C22, and C15/C27.

In terms of processing, this is a cyclic peptide. Detected in stems (at protein level).

In terms of biological role, probably participates in a plant defense mechanism. Does not display any cytotoxic activity towards K562, HeLa, MCF-7, HUVEC or red blood cells. Does not bind to phospholipd membranes containing 1-palmitoyl 2-oleoyl phosphatidylcholine (POPC) or 1-palmitoyl-2-oleophosphatidylethanolamine (POPE). The chain is Cyclotide hyen-C from Pigea enneasperma (Spade flower).